A 600-amino-acid chain; its full sequence is ATP-dependent lipid A-core flippase (600 aa).

4 helical membrane passes run 26–46 (VGIF…QPML), 82–102 (LLIV…NYFL), 167–187 (VFLF…MLAI), and 266–286 (PMLQ…VLFL). The ABC transmembrane type-1 domain occupies 30–321 (LLSIIGFVIF…LSEVSSTIQK (292 aa)). The region spanning 353-589 (LEVKNLSFFY…NGYYARLHAM (237 aa)) is the ABC transporter domain. Residue 387–394 (GRSGSGKS) coordinates ATP.

It belongs to the ABC transporter superfamily. Lipid exporter (TC 3.A.1.106) family. Homodimer.

The protein resides in the cell inner membrane. It catalyses the reaction ATP + H2O + lipid A-core oligosaccharideSide 1 = ADP + phosphate + lipid A-core oligosaccharideSide 2.. Involved in lipopolysaccharide (LPS) biosynthesis. Translocates lipid A-core from the inner to the outer leaflet of the inner membrane. Transmembrane domains (TMD) form a pore in the inner membrane and the ATP-binding domain (NBD) is responsible for energy generation. This chain is ATP-dependent lipid A-core flippase, found in Pseudomonas syringae pv. syringae (strain B728a).